The following is a 4981-amino-acid chain: Protocadherin Fat 4 (4981 aa).

The signal sequence occupies residues 1-42 (MNLAANRAPGRRRLPLPSPSLCQLLRVWGLLSLLPGSARVQA). The Extracellular portion of the chain corresponds to 43 to 4505 (AEQRQVFQVM…PDEISLPLWA (4463 aa)). Cadherin domains follow at residues 44–135 (EQRQ…APVF), 136–250 (PDPS…PPVF), 251–353 (GSSH…DPVV), 359–475 (PATS…PPVF), 476–582 (EQQV…KPVF), 584–689 (QPEG…SPVF), 690–793 (YPVQ…PPVF), 794–893 (SQAA…APHF), 894–996 (LQAV…PPVF), 997–1100 (DQIS…RPLF), 1101–1210 (NSTN…APKF), 1211–1315 (LKDF…TPSF), 1316–1420 (PKST…PPSF), 1421–1529 (PPGD…VPMF), 1529–1629 (FISQ…GPVF), 1630–1740 (TQTK…PPVF), 1741–1841 (PTDT…TPRF), 1842–1944 (SRPV…PPVF), 1945–2051 (SMSS…PPMF), 2051–2154 (FLSP…NPVF), 2155–2259 (AQAM…VPVF), 2260–2364 (ELSP…VPTF), 2365–2468 (ANNM…PPRF), 2469–2569 (QHHP…FPKV), 2570–2671 (RAKE…APTF), 2672–2775 (EEDP…APRF), 2775–2874 (FSQI…TPRF), 2875–2985 (SRPS…PPQF), 2986–3091 (LQNK…TPEF), 3092–3196 (SQNH…SPVF), 3197–3300 (VPDE…VPRF), 3301–3406 (VSKL…PPVF), 3407–3512 (SLST…GPVL), and 3511–3622 (VLTV…VEIF). N-linked (GlcNAc...) asparagine glycans are attached at residues N84 and N237. 18 N-linked (GlcNAc...) asparagine glycosylation sites follow: N393, N416, N435, N483, N551, N615, N676, N721, N825, N880, N948, N1085, N1101, N1104, N1225, N1296, N1389, and N1514. N-linked (GlcNAc...) asparagine glycans are attached at residues N1828, N1899, N1967, and N2119. Residues N2387 and N2432 are each glycosylated (N-linked (GlcNAc...) asparagine). 7 N-linked (GlcNAc...) asparagine glycosylation sites follow: N2923, N2939, N3038, N3142, N3219, N3394, and N3479. N-linked (GlcNAc...) asparagine glycans are attached at residues N3708 and N3760. An EGF-like 1 domain is found at 3804–3862 (DHDPCIHGPCQNGGSCLRRLAVGSALKIQESLPVIIVANEPLQPSQCKCVPGYAGSWCE). 12 cysteine pairs are disulfide-bonded: C3808/C3819, C3813/C3850, C3852/C3861, C3868/C3879, C3873/C3888, C3890/C3899, C3906/C3917, C3911/C3926, C3928/C3937, C3944/C3955, C3949/C3964, and C3966/C3975. In terms of domain architecture, EGF-like 2; calcium-binding spans 3864–3900 (DIDECLPAPCHNGGTCHNLVGGFSCSCPEGFTGRACE). Residues 3902 to 3938 (DINECLPSPCKHGAVCQNFPGGFNCVCKTGYTGKMCE) form the EGF-like 3; calcium-binding domain. The EGF-like 4 domain occupies 3940–3976 (SVNYCECNPCFNGGSCQSGVESYYCHCPFGVFGKHCE). In terms of domain architecture, Laminin G-like 1 spans 3977–4161 (LNSYGFEELS…LAAQGILDQC (185 aa)). An N-linked (GlcNAc...) asparagine glycan is attached at N4019. 4 cysteine pairs are disulfide-bonded: C4135–C4161, C4168–C4179, C4173–C4188, and C4190–C4199. In terms of domain architecture, EGF-like 5 spans 4164-4200 (LEGTCARNPCQHGGTCVDFWSWQQCQCMEGLTGKYCE). The Laminin G-like 2 domain maps to 4219–4399 (YHMSQSEKRE…KTDPSVKIGC (181 aa)). N-linked (GlcNAc...) asparagine glycans are attached at residues N4269 and N4314. 4 disulfide bridges follow: C4366–C4399, C4431–C4442, C4436–C4452, and C4454–C4463. Residues 4427–4464 (PPGDCASHPCQNGGSCEPGLLSGYTCSCPESHTGRTCE) form the EGF-like 6 domain. A helical membrane pass occupies residues 4506 to 4526 (VPAIVGSCATALALLVLSLIL). Over 4527-4981 (CNQCRGKMPK…AKDGEAEQYV (455 aa)) the chain is Cytoplasmic. 5 disordered regions span residues 4535 to 4585 (PKNP…PDII), 4677 to 4713 (PSSY…KPSA), 4753 to 4773 (RRSK…SRLK), 4796 to 4911 (RLNT…PAAA), and 4957 to 4981 (AAGN…EQYV). A compositionally biased stretch (polar residues) spans 4677 to 4701 (PSSYGQGLRTSSLSHSACPTPNPLS). The necessary and sufficient for interaction with MPDZ stretch occupies residues 4708-4797 (FSKPSAFYRN…GLSIEEVERL (90 aa)). The segment covering 4811–4823 (DHGRSSSEEDCRR) has biased composition (basic and acidic residues). At S4878 the chain carries Phosphoserine. The segment covering 4971–4981 (AAKDGEAEQYV) has biased composition (basic and acidic residues).

As to quaternary structure, heterophilic interaction with DCHS1; this interaction affects their respective protein levels. Interacts (via cytoplasmic domain) with MPDZ. Forms a complex with PALS1 and MPDZ. As to expression, widely expressed.

The protein localises to the membrane. In terms of biological role, cadherins are cell-cell interaction molecules. FAT4 plays a role in the maintenance of planar cell polarity as well as in inhibition of YAP1-mediated neuroprogenitor cell proliferation and differentiation. The sequence is that of Protocadherin Fat 4 (Fat4) from Mus musculus (Mouse).